The chain runs to 273 residues: 3-methyl-2-oxobutanoate hydroxymethyltransferase (273 aa).

Positions 53 and 92 each coordinate Mg(2+). 3-methyl-2-oxobutanoate contacts are provided by residues 53-54 (DS), D92, and K122. E124 contributes to the Mg(2+) binding site. Residue E191 is the Proton acceptor of the active site.

This sequence belongs to the PanB family. In terms of assembly, homodecamer; pentamer of dimers. Mg(2+) is required as a cofactor.

Its subcellular location is the cytoplasm. The enzyme catalyses 3-methyl-2-oxobutanoate + (6R)-5,10-methylene-5,6,7,8-tetrahydrofolate + H2O = 2-dehydropantoate + (6S)-5,6,7,8-tetrahydrofolate. The protein operates within cofactor biosynthesis; (R)-pantothenate biosynthesis; (R)-pantoate from 3-methyl-2-oxobutanoate: step 1/2. Its function is as follows. Catalyzes the reversible reaction in which hydroxymethyl group from 5,10-methylenetetrahydrofolate is transferred onto alpha-ketoisovalerate to form ketopantoate. This chain is 3-methyl-2-oxobutanoate hydroxymethyltransferase, found in Porphyromonas gingivalis (strain ATCC 33277 / DSM 20709 / CIP 103683 / JCM 12257 / NCTC 11834 / 2561).